Here is a 199-residue protein sequence, read N- to C-terminus: Glycerol-3-phosphate acyltransferase (199 aa).

5 helical membrane-spanning segments follow: residues 3–23 (AAVWTLLLAYLFGSIPAGVLV), 50–70 (WGPALVVAFFDVFKGGIAVLV), 78–98 (DWMLGGVALMAVLGHNYSVFL), 113–133 (LLFLDPALALWTFPIGLSVIL), and 154–174 (LALGRPLWEVATVFLMALLIF).

This sequence belongs to the PlsY family. As to quaternary structure, probably interacts with PlsX.

It is found in the cell inner membrane. It carries out the reaction an acyl phosphate + sn-glycerol 3-phosphate = a 1-acyl-sn-glycero-3-phosphate + phosphate. The protein operates within lipid metabolism; phospholipid metabolism. In terms of biological role, catalyzes the transfer of an acyl group from acyl-phosphate (acyl-PO(4)) to glycerol-3-phosphate (G3P) to form lysophosphatidic acid (LPA). This enzyme utilizes acyl-phosphate as fatty acyl donor, but not acyl-CoA or acyl-ACP. In Thermus thermophilus (strain ATCC BAA-163 / DSM 7039 / HB27), this protein is Glycerol-3-phosphate acyltransferase.